Here is a 643-residue protein sequence, read N- to C-terminus: Alpha-dioxygenase PIOX (643 aa).

H167 (proton acceptor) is an active-site residue. Ca(2+) is bound at residue D168. A heme b-binding site is contributed by H172. Positions 220, 222, 224, and 226 each coordinate Ca(2+). Residues H392, R489, and R493 each coordinate heme b.

Belongs to the peroxidase family. The cofactor is heme b. Ca(2+) serves as cofactor.

The enzyme catalyses a 1,2-saturated fatty acid + O2 = a (2R)-2-hydroperoxy fatty acid. The catalysed reaction is (9Z,12Z,15Z)-octadecatrienoate + O2 = (R)-2-hydroperoxy-(9Z,12Z,15Z)-octadecatrienoate. It catalyses the reaction (9Z,12Z)-octadecadienoate + O2 = (2R,9Z,12Z)-2-hydroperoxyoctadecadienoate. Its function is as follows. Alpha-dioxygenase that catalyzes the primary oxygenation step of a variety of 14-20 carbon fatty acids, containing up to three unsaturated bonds, into their corresponding 2R-hydroperoxides. Involved in the production of oxylipins that function in cell signaling, wound healing, and protection from infection. The chain is Alpha-dioxygenase PIOX from Nicotiana tabacum (Common tobacco).